Consider the following 239-residue polypeptide: Heptaprenylglyceryl phosphate synthase (239 aa).

A sn-glycerol 1-phosphate-binding site is contributed by Lys12. Residues Asp14 and Thr40 each contribute to the Mg(2+) site. Residues 159–164, Gly189, and 209–210 each bind sn-glycerol 1-phosphate; these read YLEYSG and GN.

Belongs to the GGGP/HepGP synthase family. Group I subfamily. In terms of assembly, homodimer. It depends on Mg(2+) as a cofactor.

The catalysed reaction is sn-glycerol 1-phosphate + all-trans-heptaprenyl diphosphate = 3-heptaprenyl-sn-glycero-1-phosphate + diphosphate. It participates in membrane lipid metabolism; glycerophospholipid metabolism. In terms of biological role, prenyltransferase that catalyzes in vivo the transfer of the heptaprenyl moiety of heptaprenyl pyrophosphate (HepPP; 35 carbon atoms) to the C3 hydroxyl of sn-glycerol-1-phosphate (G1P), producing heptaprenylglyceryl phosphate (HepGP). This reaction is an ether-bond-formation step in the biosynthesis of archaea-type G1P-based membrane lipids found in Bacillales. To a much lesser extent, is also able to use geranylgeranyl diphosphate (GGPP; C20) as the prenyl donor. This chain is Heptaprenylglyceryl phosphate synthase, found in Geobacillus kaustophilus (strain HTA426).